The primary structure comprises 519 residues: S-type anion channel SLAH2 (519 aa).

Residues 1–31 (MNNPRSVSPLVSPANHSDLLENQRQSGSGDF) are disordered. The Cytoplasmic portion of the chain corresponds to 1–140 (MNNPRSVSPL…LPEDKTWPFL (140 aa)). Polar residues predominate over residues 20–29 (LENQRQSGSG). A phosphoserine mark is found at serine 77 and serine 85. Residues 141–161 (LRFPITSYGMCLGVSSQAIMW) form a helical membrane-spanning segment. Residues 162 to 185 (KTLATTEAEKFLHVTQVINHVLWW) are Extracellular-facing. A helical transmembrane segment spans residues 186–206 (ISLLLLLAVSITYLFKTILFF). Residues 207-220 (EAVRREFRHPIRVN) are Cytoplasmic-facing. The chain crosses the membrane as a helical span at residues 221 to 241 (FFFAPLISILFLALGIPHSII). Residues 242-247 (SHLPST) are Extracellular-facing. The chain crosses the membrane as a helical span at residues 248-268 (LWYFLMAPILFLEMKIYGQWM). Residues 269–281 (SGGQRRLSKVANP) lie on the Cytoplasmic side of the membrane. A helical transmembrane segment spans residues 282-302 (TNHLSIVGNFAGALLGASMGL). The Extracellular segment spans residues 303–304 (KE). A helical membrane pass occupies residues 305–325 (GPIFFFAIGLAYYLVLFVTLY). Over 326–340 (QRLPTNETLPKELHP) the chain is Cytoplasmic. Residues 341 to 361 (VFFLFVAAPAVASMAWTKISA) traverse the membrane as a helical segment. Residue serine 362 is a topological domain, extracellular. A helical transmembrane segment spans residues 363-383 (FDLGSRLAYFISLFLYFSLVC). Residues 384–389 (RINLFR) lie on the Cytoplasmic side of the membrane. Residues 390 to 410 (GFKFSLAWWAYTFPMTAVASA) traverse the membrane as a helical segment. Over 411–424 (TIKYSDEVTGVATK) the chain is Extracellular. Residues 425–445 (ILSVVMSGAATLTVIAVLGLT) form a helical membrane-spanning segment. The Cytoplasmic portion of the chain corresponds to 446-519 (VMHAFVQRDL…VDSSTVQNSN (74 aa)). A disordered region spans residues 495-519 (PEDNQIDLESPPLVNVDSSTVQNSN). Over residues 510–519 (VDSSTVQNSN) the composition is skewed to polar residues.

Belongs to the SLAC1 S-type anion channel family. As to quaternary structure, homotrimer. As to expression, expressed in lateral root primordia and tap root tips.

Its subcellular location is the cell membrane. Slow, weak voltage-dependent S-type anion efflux channel involved in maintenance of anion homeostasis. This chain is S-type anion channel SLAH2 (SLAH2), found in Arabidopsis thaliana (Mouse-ear cress).